The chain runs to 67 residues: Potassium channel toxin alpha-KTx 6.16 (67 aa).

The first 24 residues, 1–24 (MNLKLALVLLLTVINVGMLPGATS), serve as a signal peptide directing secretion. 4 cysteine pairs are disulfide-bonded: C34–C55, C40–C60, C44–C62, and C50–C65.

It belongs to the short scorpion toxin superfamily. Potassium channel inhibitor family. Alpha-KTx 06 subfamily. In terms of tissue distribution, expressed by the venom gland.

Its subcellular location is the secreted. Functionally, inhibits voltage-gated potassium channels. The sequence is that of Potassium channel toxin alpha-KTx 6.16 from Opisthacanthus cayaporum (South American scorpion).